The sequence spans 434 residues: Protein maelstrom homolog (434 aa).

The segment at residues 4–73 (RKASRNAYYF…AQGKDSGPSE (70 aa)) is a DNA-binding region (HMG box). Disordered stretches follow at residues 62-94 (RAAQ…KQNV) and 357-385 (SHFN…SGQN). Residues 357 to 371 (SHFNSANQEQRSNTP) show a composition bias toward polar residues.

This sequence belongs to the maelstrom family. In terms of assembly, interacts with SMARCB1, SIN3B and DDX4. Interacts with piRNA-associated proteins TDRD1, PIWIL1 and PIWIL2. Interacts with TEX19.

It localises to the cytoplasm. The protein localises to the nucleus. Plays a central role during spermatogenesis by repressing transposable elements and preventing their mobilization, which is essential for the germline integrity. Acts via the piRNA metabolic process, which mediates the repression of transposable elements during meiosis by forming complexes composed of piRNAs and Piwi proteins and governs the methylation and subsequent repression of transposons. Its association with piP-bodies suggests a participation in the secondary piRNAs metabolic process. Required for the localization of germ-cell factors to the meiotic nuage. The chain is Protein maelstrom homolog (MAEL) from Macaca fascicularis (Crab-eating macaque).